Here is a 650-residue protein sequence, read N- to C-terminus: FAS-associated factor 1 (650 aa).

In terms of domain architecture, UBA spans 1–57 (MASNMDREMILADFQACTGIENIDEAITLLEQNNWDLVAAINGVIPQENGILQSEYG). Positions 62–87 (PGPAFNPASHPASAPTSSSSSAFRPV) are disordered. Residues 68-83 (PASHPASAPTSSSSSA) are compositionally biased toward low complexity. S320 carries the phosphoserine modification. A UBX domain is found at 569–646 (NAEPVSKLRI…KLFPQETLFL (78 aa)). Position 580 is a phosphothreonine (T580). At S582 the chain carries Phosphoserine.

Interacts with CDT1 and ATPase VCP/p97. Interacts (via UBA domain) with FAS (via death domain). Interacts (via UBA domain) with NLRP12 (via DAPIN/PYRIN domain). Most abundant in testis, slightly less abundant in skeletal muscle and heart, followed by prostate, thymus, ovary, small intestine, and colon. Not detected in the peripheral blood leukocytes.

The protein localises to the nucleus. In terms of biological role, ubiquitin-binding protein. Required for the progression of DNA replication forks by targeting DNA replication licensing factor CDT1 for degradation. Potentiates but cannot initiate FAS-induced apoptosis. The chain is FAS-associated factor 1 (FAF1) from Homo sapiens (Human).